The sequence spans 418 residues: L-rhamnose isomerase (418 aa).

Residues histidine 261, aspartate 293, and aspartate 295 each coordinate Mn(2+).

It belongs to the rhamnose isomerase family. Requires Mn(2+) as cofactor.

It localises to the cytoplasm. The catalysed reaction is L-rhamnopyranose = L-rhamnulose. It functions in the pathway carbohydrate degradation; L-rhamnose degradation; glycerone phosphate from L-rhamnose: step 1/3. Functionally, catalyzes the interconversion of L-rhamnose and L-rhamnulose. The chain is L-rhamnose isomerase from Clostridium beijerinckii (strain ATCC 51743 / NCIMB 8052) (Clostridium acetobutylicum).